The following is a 448-amino-acid chain: Probable glycine dehydrogenase (decarboxylating) subunit 1 (448 aa).

This sequence belongs to the GcvP family. N-terminal subunit subfamily. In terms of assembly, the glycine cleavage system is composed of four proteins: P, T, L and H. In this organism, the P 'protein' is a heterodimer of two subunits.

The enzyme catalyses N(6)-[(R)-lipoyl]-L-lysyl-[glycine-cleavage complex H protein] + glycine + H(+) = N(6)-[(R)-S(8)-aminomethyldihydrolipoyl]-L-lysyl-[glycine-cleavage complex H protein] + CO2. The glycine cleavage system catalyzes the degradation of glycine. The P protein binds the alpha-amino group of glycine through its pyridoxal phosphate cofactor; CO(2) is released and the remaining methylamine moiety is then transferred to the lipoamide cofactor of the H protein. In Exiguobacterium sibiricum (strain DSM 17290 / CCUG 55495 / CIP 109462 / JCM 13490 / 255-15), this protein is Probable glycine dehydrogenase (decarboxylating) subunit 1.